A 415-amino-acid chain; its full sequence is Mitochondrial tRNA-specific 2-thiouridylase 1 (415 aa).

Residues 37–44 (AMSGGVDS) and Met63 each bind ATP. The tract at residues 124 to 126 (NPD) is interaction with target base in tRNA. Cys129 acts as the Nucleophile in catalysis. A disulfide bridge connects residues Cys129 and Cys234. ATP is bound at residue Gly159. The interval 183–185 (KDQ) is interaction with tRNA. The active-site Cysteine persulfide intermediate is Cys234. Residues 356–357 (RH) are interaction with tRNA.

This sequence belongs to the MnmA/TRMU family.

The protein resides in the mitochondrion. The catalysed reaction is 5-taurinomethyluridine(34) in tRNA + S-sulfanyl-L-cysteinyl-[protein] + AH2 + ATP = 5-taurinomethyl-2-thiouridine(34) in tRNA + L-cysteinyl-[protein] + A + AMP + diphosphate + H(+). Functionally, catalyzes the 2-thiolation of uridine at the wobble position (U34) of mitochondrial tRNA(Lys), tRNA(Glu) and tRNA(Gln). Required for the formation of 5-taurinomethyl-2-thiouridine (tm5s2U) of mitochondrial tRNA(Lys), tRNA(Glu), and tRNA(Gln) at the wobble position. ATP is required to activate the C2 atom of the wobble base. This chain is Mitochondrial tRNA-specific 2-thiouridylase 1, found in Schizosaccharomyces pombe (strain 972 / ATCC 24843) (Fission yeast).